A 1002-amino-acid chain; its full sequence is DNA-directed RNA polymerase 1B, mitochondrial (1002 aa).

A mitochondrion-targeting transit peptide spans 1–21 (MWRYISKHAYSRKFRNSHDSA). Catalysis depends on residues Asp-703, Lys-778, and Asp-935.

It belongs to the phage and mitochondrial RNA polymerase family.

It is found in the mitochondrion. It catalyses the reaction RNA(n) + a ribonucleoside 5'-triphosphate = RNA(n+1) + diphosphate. In terms of biological role, DNA-dependent RNA polymerase catalyzes the transcription of DNA into RNA using the four ribonucleoside triphosphates as substrates. The polypeptide is DNA-directed RNA polymerase 1B, mitochondrial (RPOT1-TOM) (Nicotiana tabacum (Common tobacco)).